Reading from the N-terminus, the 263-residue chain is HTH-type transcriptional repressor NanR (263 aa).

Residues 1 to 23 (MSPMNAFDPQAEDSTTTIGRNLR) are disordered. Positions 30-98 (KKLSEMVEEE…NGERARVSRP (69 aa)) constitute an HTH gntR-type domain. The segment at residues 58–77 (ERELMAFFNVGRPSVREALA) is a DNA-binding region (H-T-H motif).

Belongs to the NanR family.

Functionally, transcriptional repressor that controls expression of the genes required for the catabolism of sialic acids. The protein is HTH-type transcriptional repressor NanR of Escherichia coli O45:K1 (strain S88 / ExPEC).